The chain runs to 176 residues: ATP-dependent protease subunit HslV (176 aa).

Threonine 5 is an active-site residue. Residues serine 161, cysteine 164, and threonine 167 each coordinate Na(+).

The protein belongs to the peptidase T1B family. HslV subfamily. In terms of assembly, a double ring-shaped homohexamer of HslV is capped on each side by a ring-shaped HslU homohexamer. The assembly of the HslU/HslV complex is dependent on binding of ATP.

It localises to the cytoplasm. It carries out the reaction ATP-dependent cleavage of peptide bonds with broad specificity.. With respect to regulation, allosterically activated by HslU binding. Protease subunit of a proteasome-like degradation complex believed to be a general protein degrading machinery. This is ATP-dependent protease subunit HslV from Thermoanaerobacter pseudethanolicus (strain ATCC 33223 / 39E) (Clostridium thermohydrosulfuricum).